The following is a 485-amino-acid chain: Glutamate--tRNA ligase (485 aa).

Residues 11 to 21 (PSPTGHLHIGG) carry the 'HIGH' region motif. A 'KMSKS' region motif is present at residues 252–256 (KMSKR). Lys255 lines the ATP pocket.

This sequence belongs to the class-I aminoacyl-tRNA synthetase family. Glutamate--tRNA ligase type 1 subfamily. As to quaternary structure, monomer.

It is found in the cytoplasm. It catalyses the reaction tRNA(Glu) + L-glutamate + ATP = L-glutamyl-tRNA(Glu) + AMP + diphosphate. Its function is as follows. Catalyzes the attachment of glutamate to tRNA(Glu) in a two-step reaction: glutamate is first activated by ATP to form Glu-AMP and then transferred to the acceptor end of tRNA(Glu). This is Glutamate--tRNA ligase from Halalkalibacterium halodurans (strain ATCC BAA-125 / DSM 18197 / FERM 7344 / JCM 9153 / C-125) (Bacillus halodurans).